We begin with the raw amino-acid sequence, 202 residues long: Imidazole glycerol phosphate synthase subunit HisH (202 aa).

In terms of domain architecture, Glutamine amidotransferase type-1 spans 3–202; sequence RIVIIDYGLG…KILRNFVEMC (200 aa). The active-site Nucleophile is the Cys79. Residues His183 and Glu185 contribute to the active site.

Heterodimer of HisH and HisF.

It is found in the cytoplasm. It carries out the reaction 5-[(5-phospho-1-deoxy-D-ribulos-1-ylimino)methylamino]-1-(5-phospho-beta-D-ribosyl)imidazole-4-carboxamide + L-glutamine = D-erythro-1-(imidazol-4-yl)glycerol 3-phosphate + 5-amino-1-(5-phospho-beta-D-ribosyl)imidazole-4-carboxamide + L-glutamate + H(+). The catalysed reaction is L-glutamine + H2O = L-glutamate + NH4(+). Its pathway is amino-acid biosynthesis; L-histidine biosynthesis; L-histidine from 5-phospho-alpha-D-ribose 1-diphosphate: step 5/9. IGPS catalyzes the conversion of PRFAR and glutamine to IGP, AICAR and glutamate. The HisH subunit catalyzes the hydrolysis of glutamine to glutamate and ammonia as part of the synthesis of IGP and AICAR. The resulting ammonia molecule is channeled to the active site of HisF. The sequence is that of Imidazole glycerol phosphate synthase subunit HisH from Methanosarcina mazei (strain ATCC BAA-159 / DSM 3647 / Goe1 / Go1 / JCM 11833 / OCM 88) (Methanosarcina frisia).